The primary structure comprises 119 residues: Large ribosomal subunit protein uL18 (119 aa).

The tract at residues 1–24 (MITKQDKNQVRKKRHARVRSKISG) is disordered. Over residues 10-20 (VRKKRHARVRS) the composition is skewed to basic residues.

The protein belongs to the universal ribosomal protein uL18 family. Part of the 50S ribosomal subunit; part of the 5S rRNA/L5/L18/L25 subcomplex. Contacts the 5S and 23S rRNAs.

Functionally, this is one of the proteins that bind and probably mediate the attachment of the 5S RNA into the large ribosomal subunit, where it forms part of the central protuberance. This chain is Large ribosomal subunit protein uL18, found in Lysinibacillus sphaericus (strain C3-41).